A 286-amino-acid chain; its full sequence is Putative cyclin-H (286 aa).

Residues 79 to 148 (AIIYIKRFYL…ILESLNFNLI (70 aa)) enclose the Cyclin N-terminal domain. Positions 235–286 (NNNNNNNNNNNNNNNNNNNNNNNNNNNNNNNNNNNNNNNNNNNNNNNNNLLL) are disordered.

This sequence belongs to the cyclin family. Cyclin C subfamily.

The protein localises to the nucleus. May regulate cdk7 involved in transcription regulation and cell cycle progression. The chain is Putative cyclin-H (cycH) from Dictyostelium discoideum (Social amoeba).